The following is a 319-amino-acid chain: Ribose-phosphate pyrophosphokinase (319 aa).

ATP contacts are provided by residues 40 to 42 (DGE) and 99 to 100 (RQ). Positions 134 and 174 each coordinate Mg(2+). Lysine 198 is a catalytic residue. D-ribose 5-phosphate is bound by residues arginine 200, aspartate 224, and 228–232 (DTAGT).

Belongs to the ribose-phosphate pyrophosphokinase family. Class I subfamily. As to quaternary structure, homohexamer. It depends on Mg(2+) as a cofactor.

It is found in the cytoplasm. The catalysed reaction is D-ribose 5-phosphate + ATP = 5-phospho-alpha-D-ribose 1-diphosphate + AMP + H(+). It functions in the pathway metabolic intermediate biosynthesis; 5-phospho-alpha-D-ribose 1-diphosphate biosynthesis; 5-phospho-alpha-D-ribose 1-diphosphate from D-ribose 5-phosphate (route I): step 1/1. Its function is as follows. Involved in the biosynthesis of the central metabolite phospho-alpha-D-ribosyl-1-pyrophosphate (PRPP) via the transfer of pyrophosphoryl group from ATP to 1-hydroxyl of ribose-5-phosphate (Rib-5-P). This Coxiella burnetii (strain RSA 493 / Nine Mile phase I) protein is Ribose-phosphate pyrophosphokinase.